A 308-amino-acid chain; its full sequence is 1,4-dihydroxy-2-naphthoate octaprenyltransferase (308 aa).

The Cytoplasmic segment spans residues 1-20 (MTEQQISRTQAWLESLRPKT). Residues 21–41 (LPLAFAAIIVGTALAWWQGHF) traverse the membrane as a helical segment. A topological domain (periplasmic) is located at residue Asp-42. Residues 43–63 (PLVALLALITAGLLQILSNLA) traverse the membrane as a helical segment. At 64 to 97 (NDYGDAVKGSDKPDRIGPLRGMQKGVITQQEMKR) the chain is on the cytoplasmic side. A helical membrane pass occupies residues 98 to 118 (ALIITVVLICLSGLALVAVAC). Residues 119–123 (HTLAD) are Periplasmic-facing. A helical transmembrane segment spans residues 124 to 144 (FVGFLILGGLSIIAAITYTVG). At 145–148 (NRPY) the chain is on the cytoplasmic side. The helical transmembrane segment at 149–169 (GYIGLGDISVLVFFGWLSVMG) threads the bilayer. Over 170–176 (SWYLQAH) the chain is Periplasmic. The helical transmembrane segment at 177 to 197 (TLIPALILPATACGLLATAVL) threads the bilayer. The Cytoplasmic segment spans residues 198 to 227 (NINNLRDINSDRENGKNTLVVRLGEVNARR). Residues 228 to 247 (YHACLLMGSLVCLALFNLFS) traverse the membrane as a helical segment. Over 248 to 250 (LHS) the chain is Periplasmic. The helical transmembrane segment at 251-270 (LWGWLFLLAAPLLVKQARYV) threads the bilayer. Topologically, residues 271–286 (MREMDPVAMRPMLERT) are cytoplasmic. Residues 287–307 (VKGALLTNLLFVLGIFLSQWA) traverse the membrane as a helical segment. Residue Ala-308 is a topological domain, periplasmic.

This sequence belongs to the MenA family. Type 1 subfamily.

The protein localises to the cell inner membrane. The enzyme catalyses an all-trans-polyprenyl diphosphate + 1,4-dihydroxy-2-naphthoate + H(+) = a 2-demethylmenaquinol + CO2 + diphosphate. The protein operates within quinol/quinone metabolism; menaquinone biosynthesis; menaquinol from 1,4-dihydroxy-2-naphthoate: step 1/2. In terms of biological role, conversion of 1,4-dihydroxy-2-naphthoate (DHNA) to demethylmenaquinone (DMK). Attaches octaprenylpyrophosphate, a membrane-bound 40-carbon side chain to DHNA. The conversion of DHNA to DMK proceeds in three stages: the removal of the carboxyl group of DHNA as CO(2), the attachment of the isoprenoid side chain, and a quinol-to-quinone oxidation, which is thought to be spontaneous. This is 1,4-dihydroxy-2-naphthoate octaprenyltransferase from Escherichia coli (strain K12).